Consider the following 241-residue polypeptide: tRNA pseudouridine synthase A (241 aa).

Asp51 functions as the Nucleophile in the catalytic mechanism. Tyr110 contributes to the substrate binding site.

It belongs to the tRNA pseudouridine synthase TruA family. In terms of assembly, homodimer.

The enzyme catalyses uridine(38/39/40) in tRNA = pseudouridine(38/39/40) in tRNA. Functionally, formation of pseudouridine at positions 38, 39 and 40 in the anticodon stem and loop of transfer RNAs. This Campylobacter jejuni subsp. jejuni serotype O:2 (strain ATCC 700819 / NCTC 11168) protein is tRNA pseudouridine synthase A.